A 332-amino-acid polypeptide reads, in one-letter code: F-box/SPRY domain-containing protein 1 (332 aa).

The segment at 1–82 (MAENDGETIV…RSPRRPEVSA (82 aa)) is disordered. Polar residues-rich tracts occupy residues 15-28 (CNLT…SSGL) and 49-64 (NPSS…QLTP). In terms of domain architecture, F-box spans 79 to 127 (EVSASRLPLKVLNQIFQYLPLKDLRSAMLTCHSWNNALSMEDSDIWQYL). The B30.2/SPRY domain occupies 138 to 330 (SDPFLLAELG…VTMVYVGSPQ (193 aa)).

The protein belongs to the FBXO45/Fsn family. As to quaternary structure, component of an SCF (SKP1-CUL1-F-box protein) E3 ubiquitin ligase complex composed of cul-1, fsn-1, rpm-1 and skr-1. Interacts (via SPRY domain) with scd-2 (via cytoplasmic domain). Interacts (via SPRY domain) with convertase egl-3 (via C-terminus). In terms of tissue distribution, expressed in GABAergic neuromuscular junctions (NMJs).

It is found in the synapse. It functions in the pathway protein modification; protein ubiquitination. Its function is as follows. Component of a SCF (SKP1-CUL1-F-box protein) E3 ubiquitin ligase complex which is required for the restriction and/or maturation of synapses in GABAergic neuromuscular junction (NMJ) presynaptic neurons. Promotes NRJ synapse development and synaptic transmission by negatively regulating the daf-2/InsR pathway in muscles. By targeting convertase egl-3 for degradation, negatively modulates insulin-like protein ins-4 and ins-6 processing. May stabilize synapse formation by promoting the down-regulation of scd-2. Regulates axon termination in PLM and ALM neurons. The chain is F-box/SPRY domain-containing protein 1 (fsn-1) from Caenorhabditis elegans.